Here is a 173-residue protein sequence, read N- to C-terminus: Methylated-DNA--protein-cysteine methyltransferase (173 aa).

Catalysis depends on cysteine 143, which acts as the Nucleophile; methyl group acceptor.

Belongs to the MGMT family.

It localises to the cytoplasm. It catalyses the reaction a 6-O-methyl-2'-deoxyguanosine in DNA + L-cysteinyl-[protein] = S-methyl-L-cysteinyl-[protein] + a 2'-deoxyguanosine in DNA. The enzyme catalyses a 4-O-methyl-thymidine in DNA + L-cysteinyl-[protein] = a thymidine in DNA + S-methyl-L-cysteinyl-[protein]. Functionally, involved in the cellular defense against the biological effects of O6-methylguanine (O6-MeG) and O4-methylthymine (O4-MeT) in DNA. Repairs the methylated nucleobase in DNA by stoichiometrically transferring the methyl group to a cysteine residue in the enzyme. This is a suicide reaction: the enzyme is irreversibly inactivated. This Pyrococcus sp. (strain NA2) protein is Methylated-DNA--protein-cysteine methyltransferase.